Here is a 139-residue protein sequence, read N- to C-terminus: Holo-[acyl-carrier-protein] synthase (139 aa).

Mg(2+) contacts are provided by Asp8 and Glu61.

The protein belongs to the P-Pant transferase superfamily. AcpS family. Requires Mg(2+) as cofactor.

The protein localises to the cytoplasm. The enzyme catalyses apo-[ACP] + CoA = holo-[ACP] + adenosine 3',5'-bisphosphate + H(+). In terms of biological role, transfers the 4'-phosphopantetheine moiety from coenzyme A to a Ser of acyl-carrier-protein. This is Holo-[acyl-carrier-protein] synthase from Bradyrhizobium diazoefficiens (strain JCM 10833 / BCRC 13528 / IAM 13628 / NBRC 14792 / USDA 110).